A 254-amino-acid chain; its full sequence is Imidazole glycerol phosphate synthase subunit HisF (254 aa).

Residues aspartate 13 and aspartate 132 contribute to the active site.

It belongs to the HisA/HisF family. Heterodimer of HisH and HisF.

Its subcellular location is the cytoplasm. The catalysed reaction is 5-[(5-phospho-1-deoxy-D-ribulos-1-ylimino)methylamino]-1-(5-phospho-beta-D-ribosyl)imidazole-4-carboxamide + L-glutamine = D-erythro-1-(imidazol-4-yl)glycerol 3-phosphate + 5-amino-1-(5-phospho-beta-D-ribosyl)imidazole-4-carboxamide + L-glutamate + H(+). The protein operates within amino-acid biosynthesis; L-histidine biosynthesis; L-histidine from 5-phospho-alpha-D-ribose 1-diphosphate: step 5/9. In terms of biological role, IGPS catalyzes the conversion of PRFAR and glutamine to IGP, AICAR and glutamate. The HisF subunit catalyzes the cyclization activity that produces IGP and AICAR from PRFAR using the ammonia provided by the HisH subunit. This chain is Imidazole glycerol phosphate synthase subunit HisF, found in Sulfurovum sp. (strain NBC37-1).